The primary structure comprises 161 residues: Probable ubiquitin-conjugating enzyme E2 17 (161 aa).

One can recognise a UBC core domain in the interval 15 to 161 (IATNRLQKEF…TRWRFHDDKV (147 aa)). Cys99 functions as the Glycyl thioester intermediate in the catalytic mechanism.

Belongs to the ubiquitin-conjugating enzyme family.

It catalyses the reaction S-ubiquitinyl-[E1 ubiquitin-activating enzyme]-L-cysteine + [E2 ubiquitin-conjugating enzyme]-L-cysteine = [E1 ubiquitin-activating enzyme]-L-cysteine + S-ubiquitinyl-[E2 ubiquitin-conjugating enzyme]-L-cysteine.. It participates in protein modification; protein ubiquitination. Functionally, accepts the ubiquitin from the E1 complex and catalyzes its covalent attachment to other proteins. This Arabidopsis thaliana (Mouse-ear cress) protein is Probable ubiquitin-conjugating enzyme E2 17 (UBC17).